A 396-amino-acid chain; its full sequence is Mannonate dehydratase (396 aa).

This sequence belongs to the mannonate dehydratase family. The cofactor is Fe(2+). Mn(2+) serves as cofactor.

The catalysed reaction is D-mannonate = 2-dehydro-3-deoxy-D-gluconate + H2O. Its pathway is carbohydrate metabolism; pentose and glucuronate interconversion. Catalyzes the dehydration of D-mannonate. This Yersinia enterocolitica serotype O:8 / biotype 1B (strain NCTC 13174 / 8081) protein is Mannonate dehydratase.